The primary structure comprises 75 residues: Acyl carrier protein (75 aa).

The Carrier domain occupies 1–75 (MSVFDKVKSI…DAVNYIKENQ (75 aa)). Position 35 is an O-(pantetheine 4'-phosphoryl)serine (serine 35).

This sequence belongs to the acyl carrier protein (ACP) family. Post-translationally, 4'-phosphopantetheine is transferred from CoA to a specific serine of apo-ACP by AcpS. This modification is essential for activity because fatty acids are bound in thioester linkage to the sulfhydryl of the prosthetic group.

It is found in the cytoplasm. The protein operates within lipid metabolism; fatty acid biosynthesis. In terms of biological role, carrier of the growing fatty acid chain in fatty acid biosynthesis. The chain is Acyl carrier protein from Desulfitobacterium hafniense (strain Y51).